A 167-amino-acid chain; its full sequence is UPF0114 protein in repA1-repA2 intergenic region (167 aa).

A run of 3 helical transmembrane segments spans residues 15–35 (LMFP…LKFF), 53–73 (LVLA…LVMV), and 136–156 (IMLC…MAYI).

The protein belongs to the UPF0114 family.

It is found in the cell membrane. The chain is UPF0114 protein in repA1-repA2 intergenic region from Buchnera aphidicola subsp. Schizaphis graminum (strain Sg).